The following is a 275-amino-acid chain: Autophagy protein 5 (275 aa).

Met1 is modified (N-acetylmethionine). Lys130 is covalently cross-linked (Glycyl lysine isopeptide (Lys-Gly) (interchain with G-Cter in ATG12)).

The protein belongs to the ATG5 family. As to quaternary structure, forms a conjugate with ATG12. Part of the minor complex composed of 4 sets of ATG12-ATG5 and ATG16L1 (400 kDa); this complex interacts with ATG3 leading to disruption of ATG7 interaction and promotion of ATG8-like proteins lipidation. Forms an 800-kDa complex composed of ATG12-ATG5 and ATG16L2. The ATG12-ATG5 conjugate interacts with RAB33A; this interaction is bridged by ATG16L1 and promotes ATG12-ATG5-ATG16L1 complex recruitment to phagophores. Interacts with TECPR1; the interaction is direct and does not take place when ATG16L1 is associated with the ATG5-ATG12 conjugate. Interacts with DHX58/RIG-1, IFIH1/MDA5 and MAVS/IPS-1 in monomeric form as well as in ATG12-ATG5 conjugate form. The interaction with MAVS is further enhanced upon vesicular stomatitis virus (VSV) infection. Interacts with ATG3. Interacts with ATG7 and ATG10. Interacts with FADD. Interacts with Bassoon/BSN; this interaction is important for the regulation of presynaptic autophagy. Interacts with ATG16L2. Conjugated to ATG12; which is essential for autophagy, but is not required for association with isolation membrane. In terms of processing, acetylated by EP300.

It is found in the cytoplasm. It localises to the preautophagosomal structure membrane. In terms of biological role, involved in autophagic vesicle formation. Conjugation with ATG12, through a ubiquitin-like conjugating system involving ATG7 as an E1-like activating enzyme and ATG10 as an E2-like conjugating enzyme, is essential for its function. The ATG12-ATG5 conjugate acts as an E3-like enzyme which is required for lipidation of ATG8 family proteins and their association to the vesicle membranes. Involved in mitochondrial quality control after oxidative damage, and in subsequent cellular longevity. Plays a critical role in multiple aspects of lymphocyte development and is essential for both B and T lymphocyte survival and proliferation. Required for optimal processing and presentation of antigens for MHC II. Involved in the maintenance of axon morphology and membrane structures, as well as in normal adipocyte differentiation. Promotes primary ciliogenesis through removal of OFD1 from centriolar satellites and degradation of IFT20 via the autophagic pathway. As part of the ATG8 conjugation system with ATG12 and ATG16L1, required for recruitment of LRRK2 to stressed lysosomes and induction of LRRK2 kinase activity in response to lysosomal stress. Functionally, may play an important role in the apoptotic process, possibly within the modified cytoskeleton. Its expression is a relatively late event in the apoptotic process, occurring downstream of caspase activity. Plays a crucial role in IFN-gamma-induced autophagic cell death by interacting with FADD. The polypeptide is Autophagy protein 5 (Sus scrofa (Pig)).